A 194-amino-acid polypeptide reads, in one-letter code: MPVPVPRAYPRLSHAIGFDDAPFAREWRGDVRIFGAVYAGPTLHAVVSGRVRRDGRNATDELSRLVTAQAEHLQLVFLQGIALAGFNVVDLGALHARTGLPVLVVARRKPRLDRIRRALLEEVPGGARKWRLIEQAGEMEPCAGLYVQRAGLLLAEAEAALGTFCLTGRIPEPLRTAHLIAGGVTRGSSAGQRV.

Belongs to the UPF0215 family.

The sequence is that of UPF0215 protein DR_A0167 from Deinococcus radiodurans (strain ATCC 13939 / DSM 20539 / JCM 16871 / CCUG 27074 / LMG 4051 / NBRC 15346 / NCIMB 9279 / VKM B-1422 / R1).